Here is a 490-residue protein sequence, read N- to C-terminus: Aspartyl aminopeptidase 4 (490 aa).

H97 is a Zn(2+) binding site. H173 lines the substrate pocket. Zn(2+)-binding residues include D273, E308, E309, and D362. E308 is a binding site for substrate. Residues D362, H365, K390, and Y397 each contribute to the substrate site. H456 contacts Zn(2+).

It belongs to the peptidase M18 family. In terms of assembly, tetrahedron-shaped homododecamer built from six homodimers. Zn(2+) serves as cofactor.

It is found in the cytoplasm. It localises to the vacuole lumen. The enzyme catalyses Release of an N-terminal aspartate or glutamate from a peptide, with a preference for aspartate.. With respect to regulation, the metalloproteases inhibitors EDTA and 1.10-phenanthroline both inhibit the activity, whereas bestatin, an inhibitor of most aminopeptidases, does not affect enzyme activity. Aspartyl aminopeptidase that contributes to peptide degradation both in the cytosol and the vacuole. Cells may respond to environmental conditions by changing the distributions of the cytosolic enzyme to the vacuole when cells need more active vacuolar degradation. This chain is Aspartyl aminopeptidase 4 (APE4), found in Saccharomyces cerevisiae (strain ATCC 204508 / S288c) (Baker's yeast).